A 282-amino-acid chain; its full sequence is Pantothenate synthetase (282 aa).

26–33 (MGNLHEGH) provides a ligand contact to ATP. Catalysis depends on H33, which acts as the Proton donor. Q57 contributes to the (R)-pantoate binding site. Q57 lines the beta-alanine pocket. 144–147 (GQKD) is an ATP binding site. Residue Q150 coordinates (R)-pantoate. Residues L173 and 181-184 (LSSR) contribute to the ATP site.

Belongs to the pantothenate synthetase family. Homodimer.

Its subcellular location is the cytoplasm. It catalyses the reaction (R)-pantoate + beta-alanine + ATP = (R)-pantothenate + AMP + diphosphate + H(+). Its pathway is cofactor biosynthesis; (R)-pantothenate biosynthesis; (R)-pantothenate from (R)-pantoate and beta-alanine: step 1/1. In terms of biological role, catalyzes the condensation of pantoate with beta-alanine in an ATP-dependent reaction via a pantoyl-adenylate intermediate. The protein is Pantothenate synthetase of Albidiferax ferrireducens (strain ATCC BAA-621 / DSM 15236 / T118) (Rhodoferax ferrireducens).